The sequence spans 302 residues: ATP synthase gamma chain (302 aa).

This sequence belongs to the ATPase gamma chain family. In terms of assembly, F-type ATPases have 2 components, CF(1) - the catalytic core - and CF(0) - the membrane proton channel. CF(1) has five subunits: alpha(3), beta(3), gamma(1), delta(1), epsilon(1). CF(0) has three main subunits: a, b and c.

The protein localises to the cell membrane. Its function is as follows. Produces ATP from ADP in the presence of a proton gradient across the membrane. The gamma chain is believed to be important in regulating ATPase activity and the flow of protons through the CF(0) complex. In Kineococcus radiotolerans (strain ATCC BAA-149 / DSM 14245 / SRS30216), this protein is ATP synthase gamma chain.